Consider the following 349-residue polypeptide: Phosphate carrier protein, mitochondrial (349 aa).

Solcar repeat units lie at residues 47 to 131 (KYFA…FKVQ), 144 to 229 (YRTF…TVEL), and 246 to 324 (EQLV…VKVW). Transmembrane regions (helical) follow at residues 48–68 (YFAL…TAVV), 108–128 (APTF…YEVF), 147–167 (FVYL…LSPL), 207–227 (PLWG…EKTV), 248–268 (LVVT…VSHP), and 304–324 (IIMI…VKVW).

This sequence belongs to the mitochondrial carrier (TC 2.A.29) family.

It localises to the mitochondrion inner membrane. Its function is as follows. Transport of phosphate groups from the cytosol to the mitochondrial matrix. This chain is Phosphate carrier protein, mitochondrial, found in Choristoneura fumiferana (Spruce budworm moth).